Reading from the N-terminus, the 549-residue chain is Cation/acetate symporter ActP (549 aa).

Transmembrane regions (helical) follow at residues 33–53 (WQAIIMFLIFVVFTLGITYWA), 77–97 (LAIAGDYMSAASFLGISALVF), 103–123 (GLIYSLGFLVGWPIILFLIAE), 148–168 (ILSACGSLVVVALYLIAQMVG), 183–203 (IAVVLVGVLMMMYVLFGGMLA), 206–226 (WVQIIKAVLLLFGASFMAFMV), 262–282 (ISALSLGLGLMFGTAGLPHIL), 303–323 (GFMGYFYILTFIIGFGAIMLV), 355–375 (LFLGFISAVAFATILAVVAGL), 404–424 (VSKITVLILGVIAIILGVLFE), 428–448 (IAFMVGLAFAIAASCNFPIIL), 464–484 (GGWLGLITAVVLMILGPTIWV), and 493–513 (IFPYEYPALFSISVAFLGIWF).

It belongs to the sodium:solute symporter (SSF) (TC 2.A.21) family.

The protein localises to the cell inner membrane. Its function is as follows. Transports acetate. The sequence is that of Cation/acetate symporter ActP from Escherichia coli O8 (strain IAI1).